The following is a 212-amino-acid chain: Thymidylate kinase (212 aa).

Residue 10–17 (GPDGAGKT) participates in ATP binding.

The protein belongs to the thymidylate kinase family.

The catalysed reaction is dTMP + ATP = dTDP + ADP. Functionally, phosphorylation of dTMP to form dTDP in both de novo and salvage pathways of dTTP synthesis. The sequence is that of Thymidylate kinase from Exiguobacterium sibiricum (strain DSM 17290 / CCUG 55495 / CIP 109462 / JCM 13490 / 255-15).